The chain runs to 287 residues: Bifunctional protein FolD (287 aa).

Residues 165–167 (GRG), Thr192, and Val233 contribute to the NADP(+) site.

Belongs to the tetrahydrofolate dehydrogenase/cyclohydrolase family. In terms of assembly, homodimer.

It catalyses the reaction (6R)-5,10-methylene-5,6,7,8-tetrahydrofolate + NADP(+) = (6R)-5,10-methenyltetrahydrofolate + NADPH. The catalysed reaction is (6R)-5,10-methenyltetrahydrofolate + H2O = (6R)-10-formyltetrahydrofolate + H(+). It functions in the pathway one-carbon metabolism; tetrahydrofolate interconversion. In terms of biological role, catalyzes the oxidation of 5,10-methylenetetrahydrofolate to 5,10-methenyltetrahydrofolate and then the hydrolysis of 5,10-methenyltetrahydrofolate to 10-formyltetrahydrofolate. This is Bifunctional protein FolD from Cutibacterium acnes (strain DSM 16379 / KPA171202) (Propionibacterium acnes).